Consider the following 423-residue polypeptide: ATP-dependent RNA helicase RhlB (423 aa).

The Q motif signature appears at 9–37 (LRFSDLPLHHQVLAALQEKGFDYCTPIQA). The 178-residue stretch at 40 to 217 (LPMSLAGKDV…FEDMNDPEYV (178 aa)) folds into the Helicase ATP-binding domain. 53–60 (AQTGTGKT) is an ATP binding site. Positions 163–166 (DEAD) match the DEAD box motif. One can recognise a Helicase C-terminal domain in the interval 241–388 (KMALLLTLLE…VSQYDVAALL (148 aa)). A disordered region spans residues 397–423 (KRGNNNSKNSANSNRTFQKKRSLKRNF). The segment covering 400 to 410 (NNNSKNSANSN) has biased composition (low complexity). The span at 413-423 (FQKKRSLKRNF) shows a compositional bias: basic residues.

Belongs to the DEAD box helicase family. RhlB subfamily. Component of the RNA degradosome, which is a multiprotein complex involved in RNA processing and mRNA degradation.

The protein localises to the cytoplasm. It carries out the reaction ATP + H2O = ADP + phosphate + H(+). In terms of biological role, DEAD-box RNA helicase involved in RNA degradation. Has RNA-dependent ATPase activity and unwinds double-stranded RNA. This chain is ATP-dependent RNA helicase RhlB, found in Pasteurella multocida (strain Pm70).